The chain runs to 112 residues: Protein ECM19 (112 aa).

The helical transmembrane segment at 35–57 threads the bilayer; it reads NTLDMVTIGIACLVGVYTGTRFF. The segment at 82 to 112 is disordered; it reads EDGNLLKVTPSLSSTPAAPPTPPTPPTPPQQ. Pro residues predominate over residues 98 to 112; the sequence is AAPPTPPTPPTPPQQ.

It localises to the mitochondrion membrane. Functionally, may be involved in cell wall organization and biogenesis. This Saccharomyces cerevisiae (strain ATCC 204508 / S288c) (Baker's yeast) protein is Protein ECM19 (ECM19).